We begin with the raw amino-acid sequence, 120 residues long: Large ribosomal subunit protein uL14 (120 aa).

It belongs to the universal ribosomal protein uL14 family. As to quaternary structure, part of the 50S ribosomal subunit. Forms a cluster with proteins L3 and L19. In the 70S ribosome, L14 and L19 interact and together make contacts with the 16S rRNA in bridges B5 and B8.

Its function is as follows. Binds to 23S rRNA. Forms part of two intersubunit bridges in the 70S ribosome. The protein is Large ribosomal subunit protein uL14 of Dictyoglomus thermophilum (strain ATCC 35947 / DSM 3960 / H-6-12).